Here is a 485-residue protein sequence, read N- to C-terminus: Glutamyl-tRNA(Gln) amidotransferase subunit A (485 aa).

Active-site charge relay system residues include Lys78 and Ser153. The active-site Acyl-ester intermediate is the Ser177.

The protein belongs to the amidase family. GatA subfamily. As to quaternary structure, heterotrimer of A, B and C subunits.

It carries out the reaction L-glutamyl-tRNA(Gln) + L-glutamine + ATP + H2O = L-glutaminyl-tRNA(Gln) + L-glutamate + ADP + phosphate + H(+). Its function is as follows. Allows the formation of correctly charged Gln-tRNA(Gln) through the transamidation of misacylated Glu-tRNA(Gln) in organisms which lack glutaminyl-tRNA synthetase. The reaction takes place in the presence of glutamine and ATP through an activated gamma-phospho-Glu-tRNA(Gln). The sequence is that of Glutamyl-tRNA(Gln) amidotransferase subunit A from Bacillus cereus (strain G9842).